Consider the following 262-residue polypeptide: 5'-nucleotidase SurE (262 aa).

Positions 9, 10, 40, and 95 each coordinate a divalent metal cation.

The protein belongs to the SurE nucleotidase family. It depends on a divalent metal cation as a cofactor.

The protein resides in the cytoplasm. It carries out the reaction a ribonucleoside 5'-phosphate + H2O = a ribonucleoside + phosphate. Nucleotidase that shows phosphatase activity on nucleoside 5'-monophosphates. The polypeptide is 5'-nucleotidase SurE (Aliarcobacter butzleri (strain RM4018) (Arcobacter butzleri)).